Here is a 214-residue protein sequence, read N- to C-terminus: Phosphoribosylglycinamide formyltransferase (214 aa).

12–14 (GSN) contacts N(1)-(5-phospho-beta-D-ribosyl)glycinamide. Residues 105–108 (LLIL) and Asn123 contribute to the (6R)-10-formyltetrahydrofolate site. The active-site Proton donor is the His125. Asp167 is a (6R)-10-formyltetrahydrofolate binding site. Residue Glu197 participates in N(1)-(5-phospho-beta-D-ribosyl)glycinamide binding.

It belongs to the GART family.

The catalysed reaction is N(1)-(5-phospho-beta-D-ribosyl)glycinamide + (6R)-10-formyltetrahydrofolate = N(2)-formyl-N(1)-(5-phospho-beta-D-ribosyl)glycinamide + (6S)-5,6,7,8-tetrahydrofolate + H(+). It functions in the pathway purine metabolism; IMP biosynthesis via de novo pathway; N(2)-formyl-N(1)-(5-phospho-D-ribosyl)glycinamide from N(1)-(5-phospho-D-ribosyl)glycinamide (10-formyl THF route): step 1/1. The sequence is that of Phosphoribosylglycinamide formyltransferase from Saccharomyces cerevisiae (strain ATCC 204508 / S288c) (Baker's yeast).